The primary structure comprises 86 residues: Large ribosomal subunit protein eL43 (86 aa).

Zn(2+)-binding residues include Cys38, Cys41, Cys56, and Cys59. The C4-type zinc finger occupies 38 to 59; it reads CPVCGRKAVRRISTGIWQCQKC.

This sequence belongs to the eukaryotic ribosomal protein eL43 family. As to quaternary structure, part of the 50S ribosomal subunit. Requires Zn(2+) as cofactor.

The chain is Large ribosomal subunit protein eL43 from Thermococcus kodakarensis (strain ATCC BAA-918 / JCM 12380 / KOD1) (Pyrococcus kodakaraensis (strain KOD1)).